We begin with the raw amino-acid sequence, 192 residues long: Fe/S biogenesis protein NfuA (192 aa).

Positions 149 and 152 each coordinate [4Fe-4S] cluster.

The protein belongs to the NfuA family. In terms of assembly, homodimer. [4Fe-4S] cluster serves as cofactor.

Functionally, involved in iron-sulfur cluster biogenesis. Binds a 4Fe-4S cluster, can transfer this cluster to apoproteins, and thereby intervenes in the maturation of Fe/S proteins. Could also act as a scaffold/chaperone for damaged Fe/S proteins. This Shewanella frigidimarina (strain NCIMB 400) protein is Fe/S biogenesis protein NfuA.